Reading from the N-terminus, the 344-residue chain is Molybdate/tungstate import ATP-binding protein WtpC (344 aa).

Residues 2–231 form the ABC transporter domain; it reads LRVESVSKDY…PVDEGVARFL (230 aa). Residue 33-40 coordinates ATP; that stretch reads GPSGAGKT. Residues 280–344 form the Mop domain; the sequence is KTSARNEFRA…SFKTSAIKVF (65 aa).

The protein belongs to the ABC transporter superfamily. Sulfate/tungstate importer (TC 3.A.1.6) family. As to quaternary structure, the complex is composed of two ATP-binding proteins (WtpC), two transmembrane proteins (WtpB) and a solute-binding protein (WtpA).

The protein resides in the cell membrane. It carries out the reaction tungstate(in) + ATP + H2O = tungstate(out) + ADP + phosphate + H(+). Part of the ABC transporter complex WtpABC involved in molybdate/tungstate import. Responsible for energy coupling to the transport system. The protein is Molybdate/tungstate import ATP-binding protein WtpC (wtpC) of Pyrococcus abyssi (strain GE5 / Orsay).